A 138-amino-acid chain; its full sequence is Transcription antitermination protein NusB (138 aa).

The protein belongs to the NusB family.

Functionally, involved in transcription antitermination. Required for transcription of ribosomal RNA (rRNA) genes. Binds specifically to the boxA antiterminator sequence of the ribosomal RNA (rrn) operons. The chain is Transcription antitermination protein NusB from Leptospira interrogans serogroup Icterohaemorrhagiae serovar copenhageni (strain Fiocruz L1-130).